The chain runs to 548 residues: Chaperonin GroEL (548 aa).

ATP contacts are provided by residues 30 to 33, Lys51, 87 to 91, Gly415, 479 to 481, and Asp495; these read TLGP, DGTTT, and NAA.

The protein belongs to the chaperonin (HSP60) family. As to quaternary structure, forms a cylinder of 14 subunits composed of two heptameric rings stacked back-to-back. Interacts with the co-chaperonin GroES.

It is found in the cytoplasm. It catalyses the reaction ATP + H2O + a folded polypeptide = ADP + phosphate + an unfolded polypeptide.. In terms of biological role, together with its co-chaperonin GroES, plays an essential role in assisting protein folding. The GroEL-GroES system forms a nano-cage that allows encapsulation of the non-native substrate proteins and provides a physical environment optimized to promote and accelerate protein folding. The chain is Chaperonin GroEL from Methylibium petroleiphilum (strain ATCC BAA-1232 / LMG 22953 / PM1).